The chain runs to 56 residues: Large ribosomal subunit protein bL32 (56 aa).

The tract at residues 1-56 (MAVPARRTSKAKKNKRRTHKGLTTPGLSRDSETGEYRMSHRISPDGTYKGRTIIEK) is disordered. Residues 7 to 20 (RTSKAKKNKRRTHK) show a composition bias toward basic residues. Residues 29 to 38 (RDSETGEYRM) show a composition bias toward basic and acidic residues.

Belongs to the bacterial ribosomal protein bL32 family.

The sequence is that of Large ribosomal subunit protein bL32 from Listeria monocytogenes serotype 4a (strain HCC23).